Consider the following 322-residue polypeptide: Undecaprenyl-phosphate 4-deoxy-4-formamido-L-arabinose transferase (322 aa).

Residues 1–235 (MFEIHPVKKV…TCLTTTPLRM (235 aa)) are Cytoplasmic-facing. Residues 236–256 (LSLLGSIIAIGGFSIAVLLVI) form a helical membrane-spanning segment. The Periplasmic segment spans residues 257-269 (LRLTFGPQWAAEG). The helical transmembrane segment at 270-290 (VFMLFAVLFTFIGAQFIGMGL) threads the bilayer. At 291 to 322 (LGEYIGRIYTDVRARPRYFVQQVIRPSSKENE) the chain is on the cytoplasmic side.

This sequence belongs to the glycosyltransferase 2 family.

The protein resides in the cell inner membrane. It carries out the reaction UDP-4-deoxy-4-formamido-beta-L-arabinose + di-trans,octa-cis-undecaprenyl phosphate = 4-deoxy-4-formamido-alpha-L-arabinopyranosyl di-trans,octa-cis-undecaprenyl phosphate + UDP. Its pathway is glycolipid biosynthesis; 4-amino-4-deoxy-alpha-L-arabinose undecaprenyl phosphate biosynthesis; 4-amino-4-deoxy-alpha-L-arabinose undecaprenyl phosphate from UDP-4-deoxy-4-formamido-beta-L-arabinose and undecaprenyl phosphate: step 1/2. It participates in bacterial outer membrane biogenesis; lipopolysaccharide biosynthesis. Its function is as follows. Catalyzes the transfer of 4-deoxy-4-formamido-L-arabinose from UDP to undecaprenyl phosphate. The modified arabinose is attached to lipid A and is required for resistance to polymyxin and cationic antimicrobial peptides. This is Undecaprenyl-phosphate 4-deoxy-4-formamido-L-arabinose transferase from Escherichia coli O45:K1 (strain S88 / ExPEC).